Reading from the N-terminus, the 480-residue chain is Siroheme synthase (480 aa).

Positions 1–203 are precorrin-2 dehydrogenase /sirohydrochlorin ferrochelatase; it reads MNYFPIFANL…QQTAQAEQEL (203 aa). NAD(+)-binding positions include 22 to 23 and 43 to 44; these read SV and NQ. S128 is modified (phosphoserine). Positions 214–480 are uroporphyrinogen-III C-methyltransferase; the sequence is GFVSLVGAGP…GGLNAGQRAA (267 aa). P223 contacts S-adenosyl-L-methionine. The Proton acceptor role is filled by D246. The active-site Proton donor is the K268. S-adenosyl-L-methionine-binding positions include 299–301, V304, 329–330, M381, and G410; these read GGD and TA.

This sequence in the N-terminal section; belongs to the precorrin-2 dehydrogenase / sirohydrochlorin ferrochelatase family. It in the C-terminal section; belongs to the precorrin methyltransferase family.

The catalysed reaction is uroporphyrinogen III + 2 S-adenosyl-L-methionine = precorrin-2 + 2 S-adenosyl-L-homocysteine + H(+). It carries out the reaction precorrin-2 + NAD(+) = sirohydrochlorin + NADH + 2 H(+). The enzyme catalyses siroheme + 2 H(+) = sirohydrochlorin + Fe(2+). It participates in cofactor biosynthesis; adenosylcobalamin biosynthesis; precorrin-2 from uroporphyrinogen III: step 1/1. The protein operates within cofactor biosynthesis; adenosylcobalamin biosynthesis; sirohydrochlorin from precorrin-2: step 1/1. Its pathway is porphyrin-containing compound metabolism; siroheme biosynthesis; precorrin-2 from uroporphyrinogen III: step 1/1. It functions in the pathway porphyrin-containing compound metabolism; siroheme biosynthesis; siroheme from sirohydrochlorin: step 1/1. It participates in porphyrin-containing compound metabolism; siroheme biosynthesis; sirohydrochlorin from precorrin-2: step 1/1. In terms of biological role, multifunctional enzyme that catalyzes the SAM-dependent methylations of uroporphyrinogen III at position C-2 and C-7 to form precorrin-2 via precorrin-1. Then it catalyzes the NAD-dependent ring dehydrogenation of precorrin-2 to yield sirohydrochlorin. Finally, it catalyzes the ferrochelation of sirohydrochlorin to yield siroheme. This Neisseria meningitidis serogroup C (strain 053442) protein is Siroheme synthase.